The primary structure comprises 333 residues: Probable 4-hydroxyproline 2-epimerase (333 aa).

The active-site Proton acceptor is Cys-90. Residues 91-92 (GH), His-223, and Asp-249 each bind substrate. Residue Cys-253 is the Proton donor of the active site. Residue 254 to 255 (GT) coordinates substrate.

This sequence belongs to the proline racemase family.

The catalysed reaction is trans-4-hydroxy-L-proline = cis-4-hydroxy-D-proline. Likely catalyzes the epimerization of trans-4-hydroxy-L-proline (t4LHyp) to cis-4-hydroxy-D-proline (c4DHyp). May be involved in the degradation pathway that converts t4LHyp to alpha-ketoglutarate, which would allow R.meliloti to grow on t4LHyp as a sole carbon source. This Rhizobium meliloti (strain 1021) (Ensifer meliloti) protein is Probable 4-hydroxyproline 2-epimerase.